The sequence spans 137 residues: Large ribosomal subunit protein uL16 (137 aa).

This sequence belongs to the universal ribosomal protein uL16 family. In terms of assembly, part of the 50S ribosomal subunit.

In terms of biological role, binds 23S rRNA and is also seen to make contacts with the A and possibly P site tRNAs. This chain is Large ribosomal subunit protein uL16, found in Cellvibrio japonicus (strain Ueda107) (Pseudomonas fluorescens subsp. cellulosa).